The following is a 573-amino-acid chain: MATPSSVASSSSRDQVQRIHRVTRENRHLWYQLTVLQQPERARACGSGMKANSDRRPVDPPPVVELRIIEGPSVEEGKDITFDYNANFFLYASLEQARTIAHGRVQNGATNNPPILTGVPASGMAYLDRPTEAGYFIFPDLSVRHEGYFRLSFSLYETTKEPKDFDLEPADSDLPPGVDWRMEIKTQPFNVFSAKKFPGLMESTSLSKTVADQGCRVRIRRDVRMRKRDGKGSGFDRRGEEEYSRRRTVTPAPAEDPNLRARSVSNASEHRGPYMPQEPPRRPSAAESYHAPPPLPPPPPSSYDAPPPAARPGHLGFGGDHNMPPQYGAPAARPYGHPQSAPIPPATPTGPYPTSSAAPSPYAKQDHHHQQQYSYNSRPPAPSASPAPPMKHAMYDNRPSEPYVPHSSPSVYASTERRPSYANYSAPAPYSTPASQPTYSTPASQPTYSTPASQPTYSAPPPAPYSAPAPPPPRPSMSQSSLAPLKIASLVSPLPPIEAQTEPLPPPPMLSTGGKRKHDHVFSQNHKPLYNGQRQLDAHYGHGYRGLTPEPDQGLYSRADGQIGVVTFNQYQV.

Residues 26–220 (NRHLWYQLTV…ADQGCRVRIR (195 aa)) form the Velvet domain. Positions 40-45 (ERARAC) match the Nuclear localization signal motif. The segment at 222–520 (DVRMRKRDGK…STGGKRKHDH (299 aa)) is disordered. Residues 230–245 (GKGSGFDRRGEEEYSR) show a composition bias toward basic and acidic residues. Composition is skewed to pro residues over residues 291-310 (APPP…PPAA) and 341-351 (APIPPATPTGP). A compositionally biased stretch (low complexity) spans 352-363 (YPTSSAAPSPYA). Pro residues predominate over residues 379–389 (PPAPSASPAPP). Over residues 432 to 448 (TPASQPTYSTPASQPTY) the composition is skewed to polar residues. Positions 458-475 (SAPPPAPYSAPAPPPPRP) are enriched in pro residues. The segment at 476–504 (SMSQSSLAPLKIASLVSPLPPIEAQTEPL) is PEST.

The protein belongs to the velvet family. VeA subfamily. In terms of assembly, component of the heterotrimeric velvet complex composed of LAE1, VEL1 and VEL2; VEL1 acting as a bridging protein between LAE1 and VEL2. Interacts with LAE1.

The protein localises to the nucleus. The protein resides in the cytoplasm. Functionally, component of the velvet transcription factor complex that controls sexual/asexual developmental ratio in response to light, promoting sexual development in the darkness while stimulating asexual sporulation under illumination. The velvet complex hat acts as a global regulator for secondary metabolite gene expression. Regulates expression of the carbohydrate-active enzyme gene clusters. This chain is Developmental and secondary metabolism regulator VEL1, found in Hypocrea jecorina (strain QM6a) (Trichoderma reesei).